Here is a 623-residue protein sequence, read N- to C-terminus: Peptidoglycan D,D-transpeptidase MrdA (623 aa).

A helical transmembrane segment spans residues 17-37 (VIVAFGVVVVCFGILIFNLYN). The active-site Acyl-ester intermediate is Ser-326.

It belongs to the transpeptidase family. MrdA subfamily.

It is found in the cell inner membrane. It catalyses the reaction Preferential cleavage: (Ac)2-L-Lys-D-Ala-|-D-Ala. Also transpeptidation of peptidyl-alanyl moieties that are N-acyl substituents of D-alanine.. The protein operates within cell wall biogenesis; peptidoglycan biosynthesis. In terms of biological role, catalyzes cross-linking of the peptidoglycan cell wall. This chain is Peptidoglycan D,D-transpeptidase MrdA, found in Salmonella typhimurium (strain SL1344).